A 481-amino-acid polypeptide reads, in one-letter code: uncharacterized protein (481 aa).

The next 11 membrane-spanning stretches (helical) occupy residues 14–34 (LGFC…GIFL), 46–66 (FAPM…IVFA), 90–110 (IGIY…GVLA), 134–154 (FSVK…INLF), 167–187 (TVGK…IITT), 218–238 (FSSM…FESI), 258–278 (IAIF…MLLG), 303–323 (IIVV…SFGA), 377–397 (LAVI…IALA), 411–431 (AFTD…LAVS), and 446–466 (YFSI…AYLH).

This sequence belongs to the amino acid-polyamine-organocation (APC) superfamily.

Its subcellular location is the cell membrane. In terms of biological role, probable amino-acid or metabolite transport protein. This is an uncharacterized protein from Mycobacterium tuberculosis (strain CDC 1551 / Oshkosh).